The primary structure comprises 174 residues: ATP-dependent protease subunit HslV (174 aa).

Residue T2 is part of the active site. Residues G157, C160, and T163 each contribute to the Na(+) site.

It belongs to the peptidase T1B family. HslV subfamily. A double ring-shaped homohexamer of HslV is capped on each side by a ring-shaped HslU homohexamer. The assembly of the HslU/HslV complex is dependent on binding of ATP.

The protein localises to the cytoplasm. It carries out the reaction ATP-dependent cleavage of peptide bonds with broad specificity.. Its activity is regulated as follows. Allosterically activated by HslU binding. Its function is as follows. Protease subunit of a proteasome-like degradation complex believed to be a general protein degrading machinery. The protein is ATP-dependent protease subunit HslV of Yersinia pseudotuberculosis serotype I (strain IP32953).